The following is a 261-amino-acid chain: Carnitinyl-CoA dehydratase (261 aa).

The active-site Nucleophile is E111. E131 (proton acceptor) is an active-site residue.

It belongs to the enoyl-CoA hydratase/isomerase family.

The enzyme catalyses (R)-carnitinyl-CoA = crotonobetainyl-CoA + H2O. The protein operates within amine and polyamine metabolism; carnitine metabolism. Catalyzes the reversible dehydration of L-carnitinyl-CoA to crotonobetainyl-CoA. This is Carnitinyl-CoA dehydratase from Citrobacter koseri (strain ATCC BAA-895 / CDC 4225-83 / SGSC4696).